Reading from the N-terminus, the 518-residue chain is Minor capsid protein L2 (518 aa).

The Nuclear localization signal signature appears at 1–10 (MARAKRVKRD). A disulfide bridge links Cys19 with Cys25. Positions 139 to 173 (IHPGPSRPPTDTPVTSTTSGSSAVLEVAPEPTPPA) are disordered. Residues 150 to 160 (TPVTSTTSGSS) show a composition bias toward low complexity. Residues 509-517 (KRLKRKRKY) carry the Nuclear localization signal motif.

This sequence belongs to the papillomaviridae L2 protein family. Interacts with major capsid protein L1. Interacts with E2; this interaction inhibits E2 transcriptional activity but not the DNA replication function E2. Interacts with host GADD45GIP1. Interacts with host HSPA8; this interaction is required for L2 nuclear translocation. Interacts with host importins KPNB2 and KPNB3. Forms a complex with importin alpha2-beta1 heterodimers via interaction with the importin alpha2 adapter. Interacts with host DYNLT1; this interaction is essential for virus intracellular transport during entry. Interacts (via C-terminus) with host retromer subunits VPS35 and VPS29. Post-translationally, highly phosphorylated.

It is found in the virion. The protein localises to the host nucleus. Its subcellular location is the host early endosome. The protein resides in the host Golgi apparatus. Its function is as follows. Minor protein of the capsid that localizes along the inner surface of the virion, within the central cavities beneath the L1 pentamers. Plays a role in capsid stabilization through interaction with the major capsid protein L1. Once the virion enters the host cell, L2 escorts the genomic DNA into the nucleus by promoting escape from the endosomal compartments and traffic through the host Golgi network. Mechanistically, the C-terminus of L2 possesses a cell-penetrating peptide that protudes from the host endosome, interacts with host cytoplasmic retromer cargo and thereby mediates the capsid delivery to the host trans-Golgi network. Plays a role through its interaction with host dynein in the intracellular microtubule-dependent transport of viral capsid toward the nucleus. Mediates the viral genome import into the nucleus through binding to host importins. Once within the nucleus, L2 localizes viral genomes to host PML bodies in order to activate early gene expression for establishment of infection. Later on, promotes late gene expression by interacting with the viral E2 protein and by inhibiting its transcriptional activation functions. During virion assembly, encapsidates the genome by direct interaction with the viral DNA. The polypeptide is Minor capsid protein L2 (Human papillomavirus 20).